Here is a 718-residue protein sequence, read N- to C-terminus: Acetolactate synthase, mitochondrial (718 aa).

Disordered stretches follow at residues 1–53 and 75–99; these read MLTR…YDTP and QSSA…QAAP. Over residues 32–45 the composition is skewed to polar residues; the sequence is RYSNNIHTSSTQNA. Low complexity predominate over residues 76-99; the sequence is SSASTAAASPAVRPQPAQHFQAAP. Position 173 (Glu-173) interacts with thiamine diphosphate. Arg-275 contributes to the FAD binding site. Residues 301–326 are disordered; that stretch reads VQPGHSPYLPSNPLNPSSQPSDPLPG. Residues 306 to 325 show a composition bias toward low complexity; that stretch reads SPYLPSNPLNPSSQPSDPLP. FAD-binding positions include 397–418 and 449–468; these read HGSA…LGVR and EIQP…VLGD. The thiamine pyrophosphate binding stretch occupies residues 541 to 621; it reads QHQMWACQYY…VKVLLFNNEF (81 aa). Residues Asp-592 and Asn-619 each contribute to the Mg(2+) site.

This sequence belongs to the TPP enzyme family. Mg(2+) serves as cofactor. The cofactor is thiamine diphosphate.

The protein resides in the mitochondrion. The enzyme catalyses 2 pyruvate + H(+) = (2S)-2-acetolactate + CO2. It participates in amino-acid biosynthesis; L-isoleucine biosynthesis; L-isoleucine from 2-oxobutanoate: step 1/4. The protein operates within amino-acid biosynthesis; L-valine biosynthesis; L-valine from pyruvate: step 1/4. The protein is Acetolactate synthase, mitochondrial (ILV2) of Cryptococcus neoformans var. grubii serotype A (strain H99 / ATCC 208821 / CBS 10515 / FGSC 9487) (Filobasidiella neoformans var. grubii).